Consider the following 21-residue polypeptide: Cupiennin-6b (21 aa).

Position 21 is a serine amide (serine 21).

Expressed by the venom gland.

It localises to the secreted. This Cupiennius salei (American wandering spider) protein is Cupiennin-6b.